We begin with the raw amino-acid sequence, 359 residues long: MRVLGIETSCDETAAAIVERDDMGEGRILSNVVLSQIAEHEPYGGVVPEIAARAHVEALDRLVDRALNDAGLKLYEVDAVAATAGPGLIGGLIVGLMTAKALAMAAQKPFYAVNHLEGHALTARLTDGLPFPYLLLLVSGGHTQMVLVRGIGDYERLGTTIDDALGEAFDKTAKLLGLPYPGGPTVERMALQGDQKRFALPRPLKGEARLDFSFSGLKTAVRQTATELVPLTDQDVTDICASFQAAVADTLSDRVGRSLERFKTEFPDCATPSLVVAGGVAANKTLRAALENLCTRHGFAFIAPPLNLCTDNAAMIAWAGAERAATQAPDSLDIAPRSRWPLDEKSAPVFGTGRRGAKA.

2 residues coordinate Fe cation: His115 and His119. Substrate-binding positions include 137–141 (LVSGG), Asp170, Gly183, and Asn283. Asp311 contributes to the Fe cation binding site. Residues 328–359 (APDSLDIAPRSRWPLDEKSAPVFGTGRRGAKA) are disordered.

This sequence belongs to the KAE1 / TsaD family. Fe(2+) is required as a cofactor.

Its subcellular location is the cytoplasm. The enzyme catalyses L-threonylcarbamoyladenylate + adenosine(37) in tRNA = N(6)-L-threonylcarbamoyladenosine(37) in tRNA + AMP + H(+). Its function is as follows. Required for the formation of a threonylcarbamoyl group on adenosine at position 37 (t(6)A37) in tRNAs that read codons beginning with adenine. Is involved in the transfer of the threonylcarbamoyl moiety of threonylcarbamoyl-AMP (TC-AMP) to the N6 group of A37, together with TsaE and TsaB. TsaD likely plays a direct catalytic role in this reaction. This Brucella abortus (strain S19) protein is tRNA N6-adenosine threonylcarbamoyltransferase.